Here is a 100-residue protein sequence, read N- to C-terminus: Small ribosomal subunit protein uS14c (100 aa).

The protein belongs to the universal ribosomal protein uS14 family. In terms of assembly, part of the 30S ribosomal subunit.

The protein resides in the plastid. Its function is as follows. Binds 16S rRNA, required for the assembly of 30S particles. The protein is Small ribosomal subunit protein uS14c of Aneura mirabilis (Parasitic liverwort).